Consider the following 190-residue polypeptide: Membrane protein FAM174A (190 aa).

An N-terminal signal peptide occupies residues 1-29 (MPTRRGCSGPCHFLASAFVLLLLPALNQS). N-linked (GlcNAc...) asparagine glycans are attached at residues Asn27 and Asn83. Topologically, residues 30–123 (VVLPSTVPRA…NPSDKPMTQR (94 aa)) are extracellular. The disordered stretch occupies residues 37 to 119 (PRAVQESKPL…AVSPNPSDKP (83 aa)). A helical membrane pass occupies residues 124 to 144 (ALTVLVVVSAAVLVYFVVRTV). The Cytoplasmic portion of the chain corresponds to 145 to 190 (RMRRRNRKTRRYGVLDTNIENMELTPLEQDDEDDDNTLFDANHPRR). The tract at residues 168-190 (LTPLEQDDEDDDNTLFDANHPRR) is disordered. Positions 172 to 181 (EQDDEDDDNT) are enriched in acidic residues.

This sequence belongs to the FAM174 family.

The protein localises to the membrane. In Rattus norvegicus (Rat), this protein is Membrane protein FAM174A (Fam174a).